Here is a 44-residue protein sequence, read N- to C-terminus: Photosystem II reaction center protein J (44 aa).

A helical transmembrane segment spans residues 12–32; the sequence is IPLWIVGFVVGSLALGLLGIL.

Belongs to the PsbJ family. PSII is composed of 1 copy each of membrane proteins PsbA, PsbB, PsbC, PsbD, PsbE, PsbF, PsbH, PsbI, PsbJ, PsbK, PsbL, PsbM, PsbT, PsbY, PsbZ, Psb30/Ycf12, at least 3 peripheral proteins of the oxygen-evolving complex and a large number of cofactors. It forms dimeric complexes.

It is found in the plastid. The protein localises to the chloroplast thylakoid membrane. In terms of biological role, one of the components of the core complex of photosystem II (PSII). PSII is a light-driven water:plastoquinone oxidoreductase that uses light energy to abstract electrons from H(2)O, generating O(2) and a proton gradient subsequently used for ATP formation. It consists of a core antenna complex that captures photons, and an electron transfer chain that converts photonic excitation into a charge separation. The chain is Photosystem II reaction center protein J from Bigelowiella natans (Pedinomonas minutissima).